Here is a 256-residue protein sequence, read N- to C-terminus: Ribosomal RNA small subunit methyltransferase J (256 aa).

Residues 101 to 102, 117 to 118, 153 to 154, and aspartate 176 each bind S-adenosyl-L-methionine; these read RD, ER, and SS.

This sequence belongs to the methyltransferase superfamily. RsmJ family.

It localises to the cytoplasm. The enzyme catalyses guanosine(1516) in 16S rRNA + S-adenosyl-L-methionine = N(2)-methylguanosine(1516) in 16S rRNA + S-adenosyl-L-homocysteine + H(+). Functionally, specifically methylates the guanosine in position 1516 of 16S rRNA. The protein is Ribosomal RNA small subunit methyltransferase J of Photobacterium profundum (strain SS9).